The chain runs to 647 residues: Leucine aminopeptidase 2 (647 aa).

Substrate contacts are provided by residues 169-171 and 295-300; these read QCQ and PYGGME. Residue H324 coordinates Zn(2+). E325 serves as the catalytic Proton acceptor. Residues H328 and E347 each coordinate Zn(2+). Y418 serves as the catalytic Proton donor.

The protein belongs to the peptidase M1 family. Requires Zn(2+) as cofactor.

The protein localises to the cytoplasm. Its subcellular location is the nucleus. The enzyme catalyses an epoxide + H2O = an ethanediol. Functionally, aminopeptidase that preferentially cleaves di- and tripeptides. Also has low epoxide hydrolase activity (in vitro). Can hydrolyze the epoxide leukotriene LTA(4) but it forms preferentially 5,6-dihydroxy-7,9,11,14-eicosatetraenoic acid rather than the cytokine leukotriene B(4) as the product compared to the homologous mammalian enzyme (in vitro). The protein is Leucine aminopeptidase 2 of Yarrowia lipolytica (strain CLIB 122 / E 150) (Yeast).